The primary structure comprises 126 residues: Large ribosomal subunit protein mL55 (126 aa).

The N-terminal 34 residues, 1–34 (MSAKGSLLRLLWQCGMTRAAPESCRYLYTSSWRA), are a transit peptide targeting the mitochondrion. Serine 86 bears the Phosphoserine mark.

This sequence belongs to the mitochondrion-specific ribosomal protein mL55 family. In terms of assembly, component of the mitochondrial ribosome large subunit (39S) which comprises a 16S rRNA and about 50 distinct proteins.

The protein localises to the mitochondrion. This is Large ribosomal subunit protein mL55 (MRPL55) from Bos taurus (Bovine).